Reading from the N-terminus, the 493-residue chain is Dipeptide permease D (493 aa).

13 consecutive transmembrane segments (helical) span residues 14-34 (VVAL…LLIL), 49-69 (ALFS…GYLA), 91-111 (LVLG…AIIV), 138-158 (GGFS…PIAC), 167-187 (WAMG…IFLC), 212-232 (NWGW…VLFW), 235-255 (WAVY…GKIY), 267-287 (LGLI…AQQG), 312-332 (MFQS…AWLI), 344-364 (IWGK…ILTL), 379-399 (LMIA…PVAM), 413-433 (VLTG…AGVI), and 458-478 (VFSE…LIWL).

This sequence belongs to the major facilitator superfamily. Proton-dependent oligopeptide transporter (POT/PTR) (TC 2.A.17) family. DtpD subfamily.

It is found in the cell inner membrane. Probable proton-dependent permease that transports dipeptides. The chain is Dipeptide permease D from Citrobacter rodentium (strain ICC168) (Citrobacter freundii biotype 4280).